The chain runs to 433 residues: Chaperone SurA (433 aa).

The first 20 residues, 1–20 (MKNWRTLIFGLMFSVSTAFA), serve as a signal peptide directing secretion. PpiC domains are found at residues 171–272 (DTEL…KVND) and 282–382 (VTEV…QLLD).

It localises to the periplasm. It carries out the reaction [protein]-peptidylproline (omega=180) = [protein]-peptidylproline (omega=0). Chaperone involved in the correct folding and assembly of outer membrane proteins. Recognizes specific patterns of aromatic residues and the orientation of their side chains, which are found more frequently in integral outer membrane proteins. May act in both early periplasmic and late outer membrane-associated steps of protein maturation. This chain is Chaperone SurA, found in Photorhabdus laumondii subsp. laumondii (strain DSM 15139 / CIP 105565 / TT01) (Photorhabdus luminescens subsp. laumondii).